We begin with the raw amino-acid sequence, 396 residues long: NADH-quinone oxidoreductase subunit D (396 aa).

The protein belongs to the complex I 49 kDa subunit family. In terms of assembly, NDH-1 is composed of 14 different subunits. Subunits NuoB, C, D, E, F, and G constitute the peripheral sector of the complex.

It localises to the cell inner membrane. It catalyses the reaction a quinone + NADH + 5 H(+)(in) = a quinol + NAD(+) + 4 H(+)(out). NDH-1 shuttles electrons from NADH, via FMN and iron-sulfur (Fe-S) centers, to quinones in the respiratory chain. The immediate electron acceptor for the enzyme in this species is believed to be ubiquinone. Couples the redox reaction to proton translocation (for every two electrons transferred, four hydrogen ions are translocated across the cytoplasmic membrane), and thus conserves the redox energy in a proton gradient. This chain is NADH-quinone oxidoreductase subunit D, found in Bartonella tribocorum (strain CIP 105476 / IBS 506).